Consider the following 420-residue polypeptide: MRIGILTIGNELITGRIKDANASYIAREMNIQGWRVPILMSVDDDEAAIKTALDHILGMADAVIVTGGLGPTADDKTTAAVARAYGLKLYRDEAVLRRIRGIFERYGFHWAPGNDKQADFPEGAELIANPVGTAWGFSLNVQGKLIAVLPGVPGELRRMLPEGVLPILRRMFPAAVSAVATRTFKLTGISEAEVDSKLADADLEGQGVEVGFYPDFPELRLVLTVRKKTEAEAQSILKNAEAQAVQRLERQIFACDDETLEGAVAALLTERKLTLAVAESCTGGLITDRLTDISGSSVFLERGAVTYSNLAKTELLGVPESILGEHGAVSEPTARLMAEGVRRLGHTDLGLATTGIAGPTGGTEQKPLGTVFIALADGRETLCRHYHFRWGDRRRVKVATSQAALMMLKRYLAAGSAPKK.

The protein belongs to the CinA family.

The chain is CinA-like protein from Syntrophus aciditrophicus (strain SB).